The primary structure comprises 245 residues: Probable phosphatase YcdX (245 aa).

Residues His-7, His-9, His-15, His-40, Glu-73, His-101, His-131, Asp-192, and His-194 each contribute to the Zn(2+) site.

This sequence belongs to the PHP family. In terms of assembly, homotrimer. Requires Zn(2+) as cofactor.

This Escherichia coli O17:K52:H18 (strain UMN026 / ExPEC) protein is Probable phosphatase YcdX.